Reading from the N-terminus, the 329-residue chain is Fructose-1,6-bisphosphatase class 1 2 (329 aa).

4 residues coordinate Mg(2+): Glu92, Asp111, Leu113, and Asp114. Substrate is bound by residues 114-117 (DGSS) and Asn206. Residue Glu278 coordinates Mg(2+).

This sequence belongs to the FBPase class 1 family. As to quaternary structure, homotetramer. Mg(2+) serves as cofactor.

The protein resides in the cytoplasm. The catalysed reaction is beta-D-fructose 1,6-bisphosphate + H2O = beta-D-fructose 6-phosphate + phosphate. It participates in carbohydrate biosynthesis; gluconeogenesis. This chain is Fructose-1,6-bisphosphatase class 1 2, found in Xanthobacter autotrophicus (strain ATCC BAA-1158 / Py2).